The primary structure comprises 1325 residues: RIMS-binding protein 2 (1325 aa).

Residues 153-181 are disordered; that stretch reads TFLSKSRSDTPRCRFDSDMDNDQNSNTSK. A compositionally biased stretch (basic and acidic residues) spans 158 to 169; sequence SRSDTPRCRFDS. One can recognise an SH3 1 domain in the interval 186-253; sequence GKVHLCIARY…PSNFVDFVQD (68 aa). Fibronectin type-III domains are found at residues 315–408, 411–493, and 507–608; these read VPYP…GKDV, APSN…KKEA, and PPQD…VPPS. Disordered regions lie at residues 601-778, 988-1010, and 1040-1090; these read SDLL…GSDL, DLGS…KKYE, and AAGP…SRPM. Over residues 627-641 the composition is skewed to basic and acidic residues; the sequence is ETKEEHLGPHLKIDE. The segment covering 664-676 has biased composition (polar residues); that stretch reads FPSSLQGRRSPSP. The segment covering 696 to 716 has biased composition (basic and acidic residues); the sequence is MAREAAQRVAESNRMERRSVF. Over residues 717 to 727 the composition is skewed to polar residues; that stretch reads SERSNAAQYAN. Basic and acidic residues-rich tracts occupy residues 763-774 and 996-1010; these read CHGEDYHTESSR and PRSE…KKYE. SH3 domains are found at residues 1121-1189 and 1225-1292; these read ISTR…EIQA and VSTR…EVPD.

Belongs to the RIMBP family. Interacts with RIMS1, RIMS2, CACNA1D and CACNA1B, and potentially with other Ca(2+) channel alpha-1 isoforms. As to expression, brain, cochlea and retina.

It localises to the cell membrane. It is found in the synapse. Functionally, plays a role in the synaptic transmission as bifunctional linker that interacts simultaneously with RIMS1, RIMS2, CACNA1D and CACNA1B. The sequence is that of RIMS-binding protein 2 (RIMBP2) from Gallus gallus (Chicken).